A 398-amino-acid chain; its full sequence is Lymphocyte transmembrane adapter 1 (398 aa).

Residues 1–37 (MDGVTPTLSTIRGRTLESSTLHVTPRSLDRNKDQITN) are Extracellular-facing. The chain crosses the membrane as a helical; Signal-anchor for type III membrane protein span at residues 38–58 (IFSGFAGLLAILLVVAVFCIL). Residues 59 to 398 (WNWNKRKKRQ…GPGTQLLPDE (340 aa)) are Cytoplasmic-facing. At tyrosine 193 the chain carries Phosphotyrosine. Residues 228–261 (TEERDEGCGDAGDCTSLYSPGAEDSDSLSNGEGS) are disordered. A phosphotyrosine mark is found at tyrosine 268 and tyrosine 294. The interval 298–330 (PAADPSGSQQQAEKDVPSSNIGHVEDKTDDPGT) is disordered. Residues 303–318 (SGSQQQAEKDVPSSNI) are compositionally biased toward polar residues. Over residues 320-329 (HVEDKTDDPG) the composition is skewed to basic and acidic residues. Phosphotyrosine occurs at positions 345 and 373. The segment at 347–398 (DFQPFTQSEDSQMKHREEMSNEDSSDYENVLTAKLGGRDSEQGPGTQLLPDE) is disordered.

As to quaternary structure, when phosphorylated, interacts with GRB2, PIK3R1 and GRAP2. Post-translationally, phosphorylated on tyrosines by Syk, Lck or ZAP70 upon TCR or BCR activation; which leads to the recruitment of GRB2, PIK3R1 and GRAP2. Expressed in spleen, thymus, and peripheral blood leukocytes. Expressed in several B-, T-, NK and monocyte cell lines.

Its subcellular location is the cell membrane. In terms of biological role, negatively regulates TCR (T-cell antigen receptor)-mediated signaling in T-cells and BCR (B-cell antigen receptor)-mediated signaling in B-cells. The protein is Lymphocyte transmembrane adapter 1 (LAX1) of Homo sapiens (Human).